The chain runs to 169 residues: uncharacterized protein (169 aa).

Residues 4–160 (IEVKRLLVNY…EGVKEQLSED (157 aa)) enclose the N-acetyltransferase domain.

This is an uncharacterized protein from Halalkalibacterium halodurans (strain ATCC BAA-125 / DSM 18197 / FERM 7344 / JCM 9153 / C-125) (Bacillus halodurans).